The primary structure comprises 328 residues: MRIIFWGTPEYSVKSLEVLKKSDHEILAVITQPDKKRSRGNKLIASPVKQYAMKEGLPVFTPETLKKNDHFISLLKEFSCDLFVVIAYGKILPKKILDIPKYKSWNAHASLLPRWRGAAPIQWSILEGDDFTGVGIMRMEEGLDTGDVLVEKQIKIEKEDNLQTLTKKLSDLSSELLLKAISKIEQNKNKDINHLLKKQKDLQRKLKYARMINKSDYIIDWANNSTDIYRKINALYPRVSTTFKKKNLKIIKIKILTTDEIQNKNYKIVSDKFKPGYVIGLIENKGIIISTKTDPILLLEAKLEGKNISKQKQLLQQLNPLIGEKFSD.

Residue 110–113 (SLLP) participates in (6S)-5,6,7,8-tetrahydrofolate binding.

The protein belongs to the Fmt family.

The catalysed reaction is L-methionyl-tRNA(fMet) + (6R)-10-formyltetrahydrofolate = N-formyl-L-methionyl-tRNA(fMet) + (6S)-5,6,7,8-tetrahydrofolate + H(+). Its function is as follows. Attaches a formyl group to the free amino group of methionyl-tRNA(fMet). The formyl group appears to play a dual role in the initiator identity of N-formylmethionyl-tRNA by promoting its recognition by IF2 and preventing the misappropriation of this tRNA by the elongation apparatus. The polypeptide is Methionyl-tRNA formyltransferase (Prochlorococcus marinus (strain MIT 9515)).